Consider the following 308-residue polypeptide: Olfactory receptor 4N5 (308 aa).

Over 1-25 (METQNLTVVTEFILLGLTQSQDAQL) the chain is Extracellular. N-linked (GlcNAc...) asparagine glycosylation is present at Asn-5. A helical transmembrane segment spans residues 26–49 (LVFVLVLIFYLIILPGNFLIIFTI). The Cytoplasmic segment spans residues 50–57 (KSDPGLTA). Residues 58–79 (PLYFFLGNLALLDASYSFIVVP) form a helical membrane-spanning segment. The Extracellular segment spans residues 80 to 100 (RMLVDFLSEKKVISYRSCITQ). A disulfide bridge connects residues Cys-97 and Cys-189. A helical membrane pass occupies residues 101–120 (LFFLHFLGAGEMFLLVVMAF). Over 121 to 139 (DRYIAICRPLHYSTIMNPR) the chain is Cytoplasmic. Residues 140 to 158 (ACYALSLVLWLGGFIHSIV) form a helical membrane-spanning segment. Residues 159 to 195 (QVALILHLPFCGPNQLDNFFCDVPQVIKLACTNTFVV) lie on the Extracellular side of the membrane. Residues 196–219 (ELLMVSNSGLLSLLCFLGLLASYA) form a helical membrane-spanning segment. Residues 220–235 (VILCRIREHSSEGKSK) are Cytoplasmic-facing. Residues 236 to 258 (AISTCTTHIIIIFLMFGPAIFIY) form a helical membrane-spanning segment. Residues 259–269 (TCPFQAFPADK) are Extracellular-facing. The chain crosses the membrane as a helical span at residues 270 to 289 (VVSLFHTVIFPLMNPVIYTL). Residues 290-308 (RNQEVKASMRKLLSQHMFC) are Cytoplasmic-facing.

The protein belongs to the G-protein coupled receptor 1 family.

The protein resides in the cell membrane. In terms of biological role, odorant receptor. This Homo sapiens (Human) protein is Olfactory receptor 4N5 (OR4N5).